Consider the following 399-residue polypeptide: Argininosuccinate synthase (399 aa).

ATP contacts are provided by residues 8 to 16 and Ala35; that span reads AYSGGLDTS. An L-citrulline-binding site is contributed by Tyr87. Gly117 is an ATP binding site. Residues Thr119, Asn123, and Asp124 each contribute to the L-aspartate site. Position 123 (Asn123) interacts with L-citrulline. 5 residues coordinate L-citrulline: Arg127, Ser176, Ser185, Glu261, and Tyr273.

Belongs to the argininosuccinate synthase family. Type 1 subfamily. As to quaternary structure, homotetramer.

The protein resides in the cytoplasm. It catalyses the reaction L-citrulline + L-aspartate + ATP = 2-(N(omega)-L-arginino)succinate + AMP + diphosphate + H(+). It participates in amino-acid biosynthesis; L-arginine biosynthesis; L-arginine from L-ornithine and carbamoyl phosphate: step 2/3. In Buchnera aphidicola subsp. Cinara cedri (strain Cc), this protein is Argininosuccinate synthase.